The sequence spans 267 residues: Type III pantothenate kinase (267 aa).

Asp6 to Thr13 lines the ATP pocket. Gly109–Arg112 is a binding site for substrate. The Proton acceptor role is filled by Asp111. Asp131 contacts K(+). Ser134 contacts ATP. Thr186 provides a ligand contact to substrate.

It belongs to the type III pantothenate kinase family. In terms of assembly, homodimer. NH4(+) is required as a cofactor. Requires K(+) as cofactor.

The protein resides in the cytoplasm. The catalysed reaction is (R)-pantothenate + ATP = (R)-4'-phosphopantothenate + ADP + H(+). The protein operates within cofactor biosynthesis; coenzyme A biosynthesis; CoA from (R)-pantothenate: step 1/5. Its function is as follows. Catalyzes the phosphorylation of pantothenate (Pan), the first step in CoA biosynthesis. The protein is Type III pantothenate kinase of Mycobacterium sp. (strain JLS).